We begin with the raw amino-acid sequence, 330 residues long: Putative heme-binding peroxidase (330 aa).

Histidine 38 (proton acceptor) is an active-site residue. Residue histidine 162 coordinates heme b. Tryptophan 178 acts as the Tryptophan radical intermediate in catalysis. Positions 286–330 are disordered; the sequence is GEYKSAPQKSPVPGAPGAGKDGEANPLARQNERAHGQAQHALAKL.

Belongs to the peroxidase family. Cytochrome c peroxidase subfamily. The cofactor is heme b.

Destroys radicals which are normally produced within the cells and which are toxic to biological systems. The protein is Putative heme-binding peroxidase (CCP2) of Mycosarcoma maydis (Corn smut fungus).